Here is a 140-residue protein sequence, read N- to C-terminus: WGATVITNLMSAIPWIGQDIVEFIWGGFSVNNATLNRFFALHFLLPFVLAALVIMHLIAMHDTVGSGNPLGISGNYDRLPFAPYFVFKDLVTIFIFFIVLSIFVFFMPNALGDSENYVMANPMQTPPAIVPEWYLLPFYA.

A helical membrane pass occupies residues Phe-38–Ile-58. 2 residues coordinate heme b: His-42 and His-56. Position 61 (His-61) interacts with a ubiquinone. Residues Phe-85–Phe-105 traverse the membrane as a helical segment.

This sequence belongs to the cytochrome b family. As to quaternary structure, fungal cytochrome b-c1 complex contains 10 subunits; 3 respiratory subunits, 2 core proteins and 5 low-molecular weight proteins. Cytochrome b-c1 complex is a homodimer. The cofactor is heme b.

Its subcellular location is the mitochondrion inner membrane. Functionally, component of the ubiquinol-cytochrome c reductase complex (complex III or cytochrome b-c1 complex) that is part of the mitochondrial respiratory chain. The b-c1 complex mediates electron transfer from ubiquinol to cytochrome c. Contributes to the generation of a proton gradient across the mitochondrial membrane that is then used for ATP synthesis. This chain is Cytochrome b (cob), found in Aspergillus terreus.